A 63-amino-acid chain; its full sequence is uncharacterized protein (63 aa).

The helical transmembrane segment at 38–58 threads the bilayer; that stretch reads ISLFIILHLCLLVCLLLSFYF.

It localises to the membrane. This is an uncharacterized protein from Saccharomyces cerevisiae (strain ATCC 204508 / S288c) (Baker's yeast).